The primary structure comprises 355 residues: Holliday junction branch migration complex subunit RuvB (355 aa).

Positions 4–195 are large ATPase domain (RuvB-L); it reads TDKLTGADRL…FGIVARLEFY (192 aa). ATP is bound by residues leucine 34, arginine 35, glycine 76, lysine 79, threonine 80, threonine 81, 142-144, arginine 185, tyrosine 195, and arginine 232; that span reads EDY. Threonine 80 provides a ligand contact to Mg(2+). The interval 196 to 266 is small ATPAse domain (RuvB-S); it reads TPDELARIVA…LADAALEMLD (71 aa). A head domain (RuvB-H) region spans residues 269 to 355; it reads SVGFDLMDRK…DGGADLAEGL (87 aa). DNA is bound by residues arginine 305, arginine 324, and arginine 329.

Belongs to the RuvB family. In terms of assembly, homohexamer. Forms an RuvA(8)-RuvB(12)-Holliday junction (HJ) complex. HJ DNA is sandwiched between 2 RuvA tetramers; dsDNA enters through RuvA and exits via RuvB. An RuvB hexamer assembles on each DNA strand where it exits the tetramer. Each RuvB hexamer is contacted by two RuvA subunits (via domain III) on 2 adjacent RuvB subunits; this complex drives branch migration. In the full resolvosome a probable DNA-RuvA(4)-RuvB(12)-RuvC(2) complex forms which resolves the HJ.

It is found in the cytoplasm. The enzyme catalyses ATP + H2O = ADP + phosphate + H(+). Its function is as follows. The RuvA-RuvB-RuvC complex processes Holliday junction (HJ) DNA during genetic recombination and DNA repair, while the RuvA-RuvB complex plays an important role in the rescue of blocked DNA replication forks via replication fork reversal (RFR). RuvA specifically binds to HJ cruciform DNA, conferring on it an open structure. The RuvB hexamer acts as an ATP-dependent pump, pulling dsDNA into and through the RuvAB complex. RuvB forms 2 homohexamers on either side of HJ DNA bound by 1 or 2 RuvA tetramers; 4 subunits per hexamer contact DNA at a time. Coordinated motions by a converter formed by DNA-disengaged RuvB subunits stimulates ATP hydrolysis and nucleotide exchange. Immobilization of the converter enables RuvB to convert the ATP-contained energy into a lever motion, pulling 2 nucleotides of DNA out of the RuvA tetramer per ATP hydrolyzed, thus driving DNA branch migration. The RuvB motors rotate together with the DNA substrate, which together with the progressing nucleotide cycle form the mechanistic basis for DNA recombination by continuous HJ branch migration. Branch migration allows RuvC to scan DNA until it finds its consensus sequence, where it cleaves and resolves cruciform DNA. This chain is Holliday junction branch migration complex subunit RuvB, found in Cupriavidus metallidurans (strain ATCC 43123 / DSM 2839 / NBRC 102507 / CH34) (Ralstonia metallidurans).